Reading from the N-terminus, the 235-residue chain is CD-NTase-associated protein 13 (235 aa).

A run of 2 helical transmembrane segments spans residues 14–34 (IVHH…LIWI) and 45–65 (IIFT…IVGL).

The protein in the C-terminal section; belongs to the bacterial STING family. As to quaternary structure, homodimer.

The protein resides in the cell inner membrane. Effector protein of a CBASS antivirus system. CBASS (cyclic oligonucleotide-based antiphage signaling system) provides immunity against bacteriophage. The CD-NTase protein synthesizes cyclic nucleotides in response to infection; these serve as specific second messenger signals. The signals activate a diverse range of effectors, leading to bacterial cell death and thus abortive phage infection. A type I-D(GG) CBASS system. Its function is as follows. Binds cyclic dinucleotides: binds c-di-GMP (synthesized by the cognate CdnE encoded upstream in the same operon), cyclic 3'3'-cyclic GMP-AMP (3'3'-cGAMP) but not cUMP-AMP. The effector protein for this CBASS system, its activity is stimulated by c-di-GMP and leads to cell death. This Flavobacteriaceae sp. genome_bin_11 protein is CD-NTase-associated protein 13.